Reading from the N-terminus, the 62-residue chain is Large ribosomal subunit protein uL30 (62 aa).

It belongs to the universal ribosomal protein uL30 family. Part of the 50S ribosomal subunit.

This chain is Large ribosomal subunit protein uL30, found in Dinoroseobacter shibae (strain DSM 16493 / NCIMB 14021 / DFL 12).